We begin with the raw amino-acid sequence, 515 residues long: Recombining binding protein suppressor of hairless-like protein (515 aa).

The segment at Met1–Trp40 is disordered. DNA-binding regions lie at residues Gln76–Phe86, Ser191–Lys196, and Arg218–Thr223. The IPT/TIG domain maps to Pro384–Thr474.

It belongs to the Su(H) family. Interacts weakly with EBNA2. Does not interact with any Notch proteins. Highly expressed in lung. Also detected in spleen, and brain.

The protein localises to the nucleus. Its function is as follows. Putative transcription factor, which cooperates with EBNA2 to activate transcription. This chain is Recombining binding protein suppressor of hairless-like protein (Rbpjl), found in Mus musculus (Mouse).